Reading from the N-terminus, the 291-residue chain is uncharacterized protein (291 aa).

Helical transmembrane passes span Met1–Ala21, Ile26–Leu46, Pro67–Val87, Ser95–His115, Thr117–Leu137, Phe149–Phe169, Phe179–Phe199, Ser208–Ile228, Val241–Phe261, and Trp270–Ile290. The region spanning Ile107–Thr138 is the EamA domain.

It is found in the cell membrane. This is an uncharacterized protein from Haemophilus influenzae (strain ATCC 51907 / DSM 11121 / KW20 / Rd).